The following is a 115-amino-acid chain: Large ribosomal subunit protein uL18 (115 aa).

The interval 1-24 is disordered; that stretch reads MISKPDKNKLRQKRHTRVRGKISG. The span at 10 to 20 shows a compositional bias: basic residues; sequence LRQKRHTRVRG.

This sequence belongs to the universal ribosomal protein uL18 family. As to quaternary structure, part of the 50S ribosomal subunit; part of the 5S rRNA/L5/L18/L25 subcomplex. Contacts the 5S and 23S rRNAs.

Functionally, this is one of the proteins that bind and probably mediate the attachment of the 5S RNA into the large ribosomal subunit, where it forms part of the central protuberance. This Lactococcus lactis subsp. cremoris (strain MG1363) protein is Large ribosomal subunit protein uL18.